Consider the following 261-residue polypeptide: Acidic leucine-rich nuclear phosphoprotein 32 family member B (261 aa).

4 LRR repeats span residues 16-40 (PAAVRELVLDNCKSNDGKIEGLTAE), 43-64 (NLEFLSLINVGLISVSNLPKLP), 65-87 (KLKKLELSDNRICGGLDMLAEKL), and 89-110 (NLTHLNLSGNKLKDISTLEPLK). Position 86 is an N6-acetyllysine (Lys-86). Residues 123–161 (CEVTNLNDYRESVFKLLPQLTYLDGYDREDREAPDSDAE) form the LRRCT domain. Residues 149–261 (DREDREAPDS…RETDDEGEDD (113 aa)) form a disordered region. Residues 157–243 (DSDAEVDGVD…DEDEDEEEEE (87 aa)) are compositionally biased toward acidic residues. Ser-158 carries the post-translational modification Phosphoserine. Positions 244–254 (SGKGEKRKRET) are enriched in basic and acidic residues. Positions 249 to 252 (KRKR) match the Nuclear localization signal motif. At Thr-254 the chain carries Phosphothreonine.

This sequence belongs to the ANP32 family. As to quaternary structure, interacts with histones H3 and H4. Interacts with KLF5; this interaction induces promoter region-specific histone incorporation and inhibition of histone acetylation by ANP32B. Some Glu residues are glycylated by TTLL8; a modification that generates a side chains of glycine on the gamma-carboxyl groups of specific glutamate residues. Post-translationally, directly cleaved by caspase-3/CASP3.

Its subcellular location is the nucleus. Functionally, multifunctional protein that is involved in the regulation of many processes including cell proliferation, apoptosis, cell cycle progression or transcription. Regulates the proliferation of neuronal stem cells, differentiation of leukemic cells and progression from G1 to S phase of the cell cycle. As negative regulator of caspase-3-dependent apoptosis, may act as an antagonist of ANP32A in regulating tissue homeostasis. Exhibits histone chaperone properties, able to recruit histones to certain promoters, thus regulating the transcription of specific genes. Also plays an essential role in the nucleocytoplasmic transport of specific mRNAs via the uncommon nuclear mRNA export receptor XPO1/CRM1. Participates in the regulation of adequate adaptive immune responses by acting on mRNA expression and cell proliferation. The polypeptide is Acidic leucine-rich nuclear phosphoprotein 32 family member B (ANP32B) (Bos taurus (Bovine)).